The chain runs to 39 residues: Protein YkiC (39 aa).

A helical membrane pass occupies residues 13–35 (LLSAKLCNCTQAIMTHIIASFLA).

Its subcellular location is the cell inner membrane. This chain is Protein YkiC, found in Escherichia coli (strain K12).